The sequence spans 335 residues: MIERIYLAKPRGFCAGVVMAIQAVEKAAVREDKPVTVYHSIVHNHTVVERLSEGGRVHFVEDLDAVDALPDSGDTVIFSAHGISPAVRERARSLGLSTIDATCPLVTKVHTEAKKYAREGYTILLIGDSAGHQEVIGTRGEAPENTILVGVLGKTGPGLNDPHAVQVPDPERLVVLTQTTLSVDDTRKTVDILKARFPALVVPPSEDLCYATKNRQDAVKNIAPNVDAFLVLTSTHSSNGMRLLELAEAECGRAYRLETAADLTRLEQNGDLGGVRSVGITSAASTPDDLVQDVVAHFRALNPALEVIEEGEWENIEFREPKKIAPTQELPRTMQ.

Residue Cys14 participates in [4Fe-4S] cluster binding. (2E)-4-hydroxy-3-methylbut-2-enyl diphosphate is bound by residues His43 and His81. 2 residues coordinate dimethylallyl diphosphate: His43 and His81. His43 and His81 together coordinate isopentenyl diphosphate. A [4Fe-4S] cluster-binding site is contributed by Cys103. His132 serves as a coordination point for (2E)-4-hydroxy-3-methylbut-2-enyl diphosphate. Residue His132 participates in dimethylallyl diphosphate binding. His132 contributes to the isopentenyl diphosphate binding site. Catalysis depends on Glu134, which acts as the Proton donor. Thr179 lines the (2E)-4-hydroxy-3-methylbut-2-enyl diphosphate pocket. Residue Cys209 coordinates [4Fe-4S] cluster. Positions 237, 238, 239, and 285 each coordinate (2E)-4-hydroxy-3-methylbut-2-enyl diphosphate. Dimethylallyl diphosphate is bound by residues Ser237, Ser238, Asn239, and Ser285. Ser237, Ser238, Asn239, and Ser285 together coordinate isopentenyl diphosphate.

Belongs to the IspH family. It depends on [4Fe-4S] cluster as a cofactor.

It catalyses the reaction isopentenyl diphosphate + 2 oxidized [2Fe-2S]-[ferredoxin] + H2O = (2E)-4-hydroxy-3-methylbut-2-enyl diphosphate + 2 reduced [2Fe-2S]-[ferredoxin] + 2 H(+). The enzyme catalyses dimethylallyl diphosphate + 2 oxidized [2Fe-2S]-[ferredoxin] + H2O = (2E)-4-hydroxy-3-methylbut-2-enyl diphosphate + 2 reduced [2Fe-2S]-[ferredoxin] + 2 H(+). It functions in the pathway isoprenoid biosynthesis; dimethylallyl diphosphate biosynthesis; dimethylallyl diphosphate from (2E)-4-hydroxy-3-methylbutenyl diphosphate: step 1/1. It participates in isoprenoid biosynthesis; isopentenyl diphosphate biosynthesis via DXP pathway; isopentenyl diphosphate from 1-deoxy-D-xylulose 5-phosphate: step 6/6. Catalyzes the conversion of 1-hydroxy-2-methyl-2-(E)-butenyl 4-diphosphate (HMBPP) into a mixture of isopentenyl diphosphate (IPP) and dimethylallyl diphosphate (DMAPP). Acts in the terminal step of the DOXP/MEP pathway for isoprenoid precursor biosynthesis. The sequence is that of 4-hydroxy-3-methylbut-2-enyl diphosphate reductase from Deinococcus radiodurans (strain ATCC 13939 / DSM 20539 / JCM 16871 / CCUG 27074 / LMG 4051 / NBRC 15346 / NCIMB 9279 / VKM B-1422 / R1).